Consider the following 729-residue polypeptide: Probable cyclic di-GMP phosphodiesterase PdeA (729 aa).

The next 8 membrane-spanning stretches (helical) occupy residues 17–37, 41–61, 83–103, 126–146, 163–183, 214–234, 238–258, and 289–309; these read AFTL…LAII, YIFL…IFGW, FLQT…ACAI, FWLG…VGSF, IFTV…NMLF, AFTL…CTPY, FIAG…VGKL, and YSLA…LYMV. The 129-residue stretch at 348–476 folds into the GGDEF domain; that stretch reads AGKSFCCLRI…AHHHVLALDS (129 aa). In terms of domain architecture, EAL spans 488-729; sequence QVLLLNTIRT…LIGRPQPLAD (242 aa).

It is found in the cell membrane. The catalysed reaction is 3',3'-c-di-GMP + H2O = 5'-phosphoguanylyl(3'-&gt;5')guanosine + H(+). Functionally, phosphodiesterase (PDE) that catalyzes the hydrolysis of cyclic-di-GMP (c-di-GMP) to 5'-pGpG. The protein is Probable cyclic di-GMP phosphodiesterase PdeA of Escherichia coli (strain K12).